We begin with the raw amino-acid sequence, 492 residues long: Solute carrier family 2, facilitated glucose transporter member 1 (492 aa).

Met-1 is modified (N-acetylmethionine). Topologically, residues 1–11 are cytoplasmic; sequence MEPTSKKLTGR. The chain crosses the membrane as a helical span at residues 12–33; that stretch reads LMLAVGGAVLGSLQFGYNTGVI. Residues 34 to 66 lie on the Extracellular side of the membrane; that stretch reads NAPQKVIEEFYNQTWVQRYGEPIPPATLTTLWS. An N-linked (GlcNAc...) asparagine glycan is attached at Asn-45. A helical membrane pass occupies residues 67-87; the sequence is LSVAIFSVGGMIGSFSVGLFV. The Cytoplasmic portion of the chain corresponds to 88–90; that stretch reads NRF. A helical membrane pass occupies residues 91-112; that stretch reads GRRNSMLMMNLLAFVSAVLMGF. Residues 113–120 lie on the Extracellular side of the membrane; that stretch reads SKLGKSFE. The helical transmembrane segment at 121–144 threads the bilayer; that stretch reads MLILGRFIIGVYCGLTTGFVPMYV. The Cytoplasmic portion of the chain corresponds to 145–155; it reads GEVSPTELRGA. A helical membrane pass occupies residues 156–176; sequence LGTLHQLGIVVGILIAQVFGL. D-glucose is bound at residue Gln-161. The Extracellular segment spans residues 177 to 185; it reads DSIMGNQEL. A helical transmembrane segment spans residues 186–206; it reads WPLLLSVIFIPALLQCILLPF. Over 207–271 the chain is Cytoplasmic; sequence CPESPRFLLI…LFRSAAYRQP (65 aa). Ser-226 bears the Phosphoserine mark. Residues 272-293 form a helical membrane-spanning segment; that stretch reads ILIAVVLQLSQQLSGINAVFYY. Residues 282 to 283 and Asn-288 contribute to the D-glucose site; that span reads QQ. The Extracellular segment spans residues 294 to 306; it reads STSIFEKAGVQQP. The chain crosses the membrane as a helical span at residues 307-328; that stretch reads VYATIGSGIVNTAFTVVSLFVV. Residue Asn-317 participates in D-glucose binding. Topologically, residues 329–334 are cytoplasmic; it reads ERAGRR. A helical membrane pass occupies residues 335 to 355; it reads TLHLIGLAGMAGCAVLMTIAL. Residues 356 to 365 are Extracellular-facing; sequence ALLERLPWMS. The helical transmembrane segment at 366–388 threads the bilayer; it reads YLSIVAIFGFVAFFEVGPGPIPW. D-glucose-binding residues include Glu-380 and Trp-388. Over 389–401 the chain is Cytoplasmic; the sequence is FIVAELFSQGPRP. The helical transmembrane segment at 402-422 threads the bilayer; the sequence is AAIAVAGFSNWTSNFIVGMCF. The Extracellular segment spans residues 423–429; that stretch reads QYVEQLC. A helical membrane pass occupies residues 430–450; sequence GPYVFIIFTVLLVLFFIFTYF. The Cytoplasmic portion of the chain corresponds to 451 to 492; that stretch reads KVPETKGRTFDEIASGFRQGGASQSDKTPEELFHPLGADSQV. Ser-465 is modified (phosphoserine). The interval 468–492 is disordered; sequence RQGGASQSDKTPEELFHPLGADSQV. Thr-478 carries the post-translational modification Phosphothreonine. A Phosphoserine modification is found at Ser-490.

The protein belongs to the major facilitator superfamily. Sugar transporter (TC 2.A.1.1) family. Glucose transporter subfamily. In terms of assembly, found in a complex with ADD2, DMTN and SLC2A1. Interacts (via C-terminus cytoplasmic region) with DMTN. Interacts with SNX27; the interaction is required when endocytosed to prevent degradation in lysosomes and promote recycling to the plasma membrane. Interacts with GIPC (via PDZ domain). Interacts with STOM. Interacts with SGTA (via Gln-rich region). Interacts with BSG. Interacts with SMIM43; the interaction may promote SLC2A1-mediated glucose transport to meet the energy needs of mesendoderm differentiation. Phosphorylation at Ser-226 by PKC promotes glucose uptake by increasing cell membrane localization. Detected in brain capillary (at protein level). Detected in brain capillary.

The protein localises to the cell membrane. It is found in the photoreceptor inner segment. The catalysed reaction is D-glucose(out) = D-glucose(in). With respect to regulation, the uptake of glucose is inhibited by cytochalasin B. Glucose uptake is increased in response to phorbol ester 12-O-tetradecanoylphorbol-13-acetate (TPA) treatment: TPA-induced glucose uptake requires phosphorylation at Ser-226. Its function is as follows. Facilitative glucose transporter, which is responsible for constitutive or basal glucose uptake. Has a very broad substrate specificity; can transport a wide range of aldoses including both pentoses and hexoses. Most important energy carrier of the brain: present at the blood-brain barrier and assures the energy-independent, facilitative transport of glucose into the brain. In association with BSG and NXNL1, promotes retinal cone survival by increasing glucose uptake into photoreceptors. Required for mesendoderm differentiation. This is Solute carrier family 2, facilitated glucose transporter member 1 from Bos taurus (Bovine).